We begin with the raw amino-acid sequence, 682 residues long: MLPLNSVRTHAGRLVPVMLAALFLAGCPSQAPQSPAMQQRVEGKAGASSDYYLQQMQQSSDDSKADWQLLAIHALIQEGKLPQAGNQLGTLPSQLGDKQRQEQRLLTAELAVAQNDMNAANTMLAQLDVKSLSPQQQERYYQAQIKAAQDRTSLTLIRAYIGLEPLLQGDAHQRNIDQTWTALTRLNQQDLSSMVINVDENTLQGWLDLLNLWQTKAQVPSDLQAAIEDWKKRYPRHPAAKQLPSQLGGTPPAAAAPTTGETAPTGGNAIALLLPLNGQAQAFANAIQQGFSAARSGQASLAMPAQPAQLAQAANNAAAATPGAPAVPSPASSTPSAVSPTPAAATTVMPALTAATAGTIPVKVYDTSNQALANVIAQAQKDGATTIVGPLLKNEVEQLPGLNPSLNVLALNQPEHIQPNPNICYFALSPEDEAADAAQFIHKQGKQHPLILAPRGNLGDRVVAAFAKSWQQQSGGVVLQQRTGSMYDLKQAINSGAGIPLNGQPVITAASAPQPSTTVGGLTIPNQAPPIAAVTSDGNVDAIYIIATPDELALLKPMIDMRNKGASRPALYASSRSYQAGLGPDFRFEMEGLQFSDIPLLTGASPALMQQVSTQFRNDYSLVRLFAMGMDAWKLASDFSQLHQPGSSLSGATGILSASSDCVVNRKLTWLQFRQGQLVPAS.

The N-terminal stretch at 1–26 (MLPLNSVRTHAGRLVPVMLAALFLAG) is a signal peptide. C27 carries N-palmitoyl cysteine lipidation. C27 carries the S-diacylglycerol cysteine lipid modification. Disordered regions lie at residues 240–262 (AKQL…TGET) and 314–341 (ANNA…VSPT). Positions 248–262 (GGTPPAAAAPTTGET) are enriched in low complexity.

Belongs to the LpoA family. In terms of assembly, interacts with PBP1a.

It is found in the cell outer membrane. In terms of biological role, regulator of peptidoglycan synthesis that is essential for the function of penicillin-binding protein 1A (PBP1a). The protein is Penicillin-binding protein activator LpoA of Dickeya chrysanthemi (strain Ech1591) (Dickeya zeae (strain Ech1591)).